Here is a 702-residue protein sequence, read N- to C-terminus: Ribosomal RNA large subunit methyltransferase K/L (702 aa).

Positions 43 to 154 (LIYQSLMWSR…KETASIALDL (112 aa)) constitute a THUMP domain.

Belongs to the methyltransferase superfamily. RlmKL family.

The protein localises to the cytoplasm. The catalysed reaction is guanosine(2445) in 23S rRNA + S-adenosyl-L-methionine = N(2)-methylguanosine(2445) in 23S rRNA + S-adenosyl-L-homocysteine + H(+). It carries out the reaction guanosine(2069) in 23S rRNA + S-adenosyl-L-methionine = N(2)-methylguanosine(2069) in 23S rRNA + S-adenosyl-L-homocysteine + H(+). In terms of biological role, specifically methylates the guanine in position 2445 (m2G2445) and the guanine in position 2069 (m7G2069) of 23S rRNA. The chain is Ribosomal RNA large subunit methyltransferase K/L from Salmonella paratyphi B (strain ATCC BAA-1250 / SPB7).